The sequence spans 209 residues: Ubiquitin-conjugating enzyme E2 S (209 aa).

Residues 14-160 (QTIRQVMREL…ARMMTEIHAQ (147 aa)) form the UBC core domain. Cys-98 functions as the Glycyl thioester intermediate in the catalytic mechanism. The disordered stretch occupies residues 165–194 (GVGAASDAKDDDGPSTKKHAGLDKKLQDKK). Over residues 171 to 194 (DAKDDDGPSTKKHAGLDKKLQDKK) the composition is skewed to basic and acidic residues.

It belongs to the ubiquitin-conjugating enzyme family.

The catalysed reaction is S-ubiquitinyl-[E1 ubiquitin-activating enzyme]-L-cysteine + [E2 ubiquitin-conjugating enzyme]-L-cysteine = [E1 ubiquitin-activating enzyme]-L-cysteine + S-ubiquitinyl-[E2 ubiquitin-conjugating enzyme]-L-cysteine.. The protein operates within protein modification; protein ubiquitination. Its function is as follows. Catalyzes the covalent attachment of ubiquitin to other proteins. Acts as an essential factor of the anaphase promoting complex/cyclosome (APC/C), a cell cycle-regulated ubiquitin ligase that controls progression through mitosis. Acts by specifically elongating polyubiquitin chains initiated by the E2 enzyme vih/UbcH10 on APC/C substrates, enhancing the degradation of APC/C substrates by the proteasome and promoting mitotic exit. The protein is Ubiquitin-conjugating enzyme E2 S of Drosophila persimilis (Fruit fly).